We begin with the raw amino-acid sequence, 348 residues long: D-alanine--D-alanine ligase (348 aa).

An ATP-grasp domain is found at 132-334 (KRILEVAGVP…YSDLIKELVV (203 aa)). Position 162–217 (162–217 (LEKLTFPVFVKPANMGSSVGISKAENESELRSAIDLALKYDSRILIEQGVVAREIE)) interacts with ATP. 3 residues coordinate Mg(2+): Asp288, Glu301, and Asn303.

Belongs to the D-alanine--D-alanine ligase family. It depends on Mg(2+) as a cofactor. Requires Mn(2+) as cofactor.

The protein resides in the cytoplasm. It carries out the reaction 2 D-alanine + ATP = D-alanyl-D-alanine + ADP + phosphate + H(+). The protein operates within cell wall biogenesis; peptidoglycan biosynthesis. Cell wall formation. This is D-alanine--D-alanine ligase from Streptococcus thermophilus (strain ATCC BAA-491 / LMD-9).